Here is a 425-residue protein sequence, read N- to C-terminus: Transmembrane protein 184A (425 aa).

A run of 7 helical transmembrane segments spans residues 51-71 (LFLT…TALL), 96-116 (LLFI…LLGG), 133-153 (FVIY…SAIM), 189-209 (TLQF…LQAF), 226-246 (VTLV…LFYF), 261-281 (FLTI…LAIL), and 303-323 (LAAG…SLAL). Residues 375 to 425 (QYTQQSTHEAPGPGQGGHPAPSTHPGPASGSGGGKKSRNIEKRMLIPSEDL) form a disordered region. Low complexity predominate over residues 392-402 (HPAPSTHPGPA).

The protein belongs to the TMEM184 family. In terms of tissue distribution, expressed in testis, pancreas, parotid salivary gland and mammary gland (at protein level).

It localises to the cell membrane. Its subcellular location is the cytoplasm. It is found in the perinuclear region. The protein resides in the cytoplasmic vesicle membrane. The protein localises to the early endosome membrane. It localises to the endosome. Its subcellular location is the cytoplasmic vesicle. It is found in the secretory vesicle membrane. In terms of biological role, acts as a heparin receptor in vascular cells. May be involved in vesicle transport in exocrine cells and Sertoli cells. This chain is Transmembrane protein 184A (Tmem184a), found in Mus musculus (Mouse).